Reading from the N-terminus, the 102-residue chain is Small ribosomal subunit protein uS10 (102 aa).

It belongs to the universal ribosomal protein uS10 family. In terms of assembly, part of the 30S ribosomal subunit.

Its function is as follows. Involved in the binding of tRNA to the ribosomes. This is Small ribosomal subunit protein uS10 from Citrifermentans bemidjiense (strain ATCC BAA-1014 / DSM 16622 / JCM 12645 / Bem) (Geobacter bemidjiensis).